Consider the following 364-residue polypeptide: MPKPAIKTAAKLAMSSAGKRGKPSTPKSLAKPQTTKPKTASKLKAKHGEQKRLHPRNLHINGYDFPALMASFPKLKAFVRPTPYGALSIDFADPFAVKNLNAALLKHHYGLAFWDIPKGALCPPIPGRVDYLHYLADLLFEGAKVKRAAAIHALDIGTGANGVYAILGHQVYDWQFVASDINPQSLINVQRIIDNNPSLQGHLSLRRQQDDKAVFKGIIQASDRFELTLCNPPFHGSLKEASEGSLRKVRNLQLNRGEQPKATSATLNFGGQAAELWCQGGEKQFLATMIRESQAFAEQCLWFTSLVSKQENLKPCYQALEKLGVDTVKTIEMQQGNKVTRVLAWSFHSQAKRLQWRNQVISGA.

Positions 1–52 are disordered; that stretch reads MPKPAIKTAAKLAMSSAGKRGKPSTPKSLAKPQTTKPKTASKLKAKHGEQKR. Residues 25-38 show a composition bias toward polar residues; it reads TPKSLAKPQTTKPK.

It belongs to the methyltransferase superfamily. METTL16/RlmF family.

The protein localises to the cytoplasm. The catalysed reaction is adenosine(1618) in 23S rRNA + S-adenosyl-L-methionine = N(6)-methyladenosine(1618) in 23S rRNA + S-adenosyl-L-homocysteine + H(+). Functionally, specifically methylates the adenine in position 1618 of 23S rRNA. The chain is Ribosomal RNA large subunit methyltransferase F from Shewanella sp. (strain ANA-3).